The following is a 199-amino-acid chain: Nucleoid occlusion factor SlmA (199 aa).

Residues 11–71 (ERRQQVLTVL…ALIDNLEAHL (61 aa)) enclose the HTH tetR-type domain. A DNA-binding region (H-T-H motif) is located at residues 34 to 53 (TTARIAAEVGVSEAALYRYY).

Belongs to the nucleoid occlusion factor SlmA family. Homodimer. Interacts with FtsZ.

The protein localises to the cytoplasm. It localises to the nucleoid. Required for nucleoid occlusion (NO) phenomenon, which prevents Z-ring formation and cell division over the nucleoid. Acts as a DNA-associated cell division inhibitor that binds simultaneously chromosomal DNA and FtsZ, and disrupts the assembly of FtsZ polymers. SlmA-DNA-binding sequences (SBS) are dispersed on non-Ter regions of the chromosome, preventing FtsZ polymerization at these regions. This is Nucleoid occlusion factor SlmA from Pasteurella multocida (strain Pm70).